The chain runs to 747 residues: Elongation factor G, mitochondrial (747 aa).

Residues 1 to 32 (MTLITRVLNSNLPLRLSALKTVRQLQCGYSSH) constitute a mitochondrion transit peptide. The 278-residue stretch at 42-319 (ERIRNIGISA…AIIDYLPNPG (278 aa)) folds into the tr-type G domain. Residues 51–58 (AHIDSGKT), 118–122 (DTPGH), and 172–175 (NKLD) contribute to the GTP site.

The protein belongs to the TRAFAC class translation factor GTPase superfamily. Classic translation factor GTPase family. EF-G/EF-2 subfamily.

Its subcellular location is the mitochondrion. Its pathway is protein biosynthesis; polypeptide chain elongation. Its function is as follows. Mitochondrial GTPase that catalyzes the GTP-dependent ribosomal translocation step during translation elongation. During this step, the ribosome changes from the pre-translocational (PRE) to the post-translocational (POST) state as the newly formed A-site-bound peptidyl-tRNA and P-site-bound deacylated tRNA move to the P and E sites, respectively. Catalyzes the coordinated movement of the two tRNA molecules, the mRNA and conformational changes in the ribosome. Essential during development as it acts as a retrograde signal from mitochondria to the nucleus to slow down cell proliferation if mitochondrial energy output is low. The chain is Elongation factor G, mitochondrial from Drosophila virilis (Fruit fly).